The chain runs to 433 residues: Glycerol-3-phosphate dehydrogenase [NAD(+)] (433 aa).

Residues 17–22, Phe49, and Phe117 each bind NAD(+); that span reads GSGNWG. Lys140 is a substrate binding site. NAD(+) is bound at residue Ala173. The disordered stretch occupies residues 187–246; it reads IAYDPPPIDSSRAATPRDRSPNYDSTSANKLPDLTVTSADSNGKDDRGRRTKAKLTPVPE. Over residues 208 to 227 the composition is skewed to polar residues; that stretch reads NYDSTSANKLPDLTVTSADS. The active-site Proton acceptor is the Lys283. NAD(+) is bound by residues Arg349 and Gln378. Residue 349–350 coordinates substrate; sequence RN.

It belongs to the NAD-dependent glycerol-3-phosphate dehydrogenase family.

The catalysed reaction is sn-glycerol 3-phosphate + NAD(+) = dihydroxyacetone phosphate + NADH + H(+). This chain is Glycerol-3-phosphate dehydrogenase [NAD(+)], found in Pyricularia oryzae (strain Y34) (Rice blast fungus).